Here is a 526-residue protein sequence, read N- to C-terminus: MSGNKVEVDKRRTFAIISHPDAGKTTITEKVLLFGNALQKAGTVKGKKSGQHAKSDWMEMEKDRGISITTSVMQFPYNDALVNLLDTPGHEDFSEDTYRTLTAVDSCLMVIDSAKGVEQRTIKLMEVTRLRDTPIVTFMNKLDRDIRDPLELMDEVEEVLNIACAPITWPISSGKEFKGVYHLLRDEVILYQSGQGHTIQDSRIIKGLNNPELDEAIGAYAAEVREELELVLGASNEFDLEMFLAGELTPVFFGTALGNFGVDHILDGIVEWAPKPQARETEVRDIQPEDEKFSGFVFKIQANMDPKHRDRVAFMRICSGRYEQGMKMHHVRLGKDVNVSDALTFMAGDRNRAEVAYPGDIIGLHNHGTMRIGDTFTQGEKFRFTGIPNFAPEMFRRIRLKDPLKQKQLLKGLVQLSEEGAVQVFRPIDSNDLIVGAVGVLQFEVVVGRLKSEYKVEAIYEGISVATARWVYCDDERKLEEFRRKCSNNLALDGGDNLTYIAPTMVNLNLSMERYPDIQFAKTREN.

The region spanning 9–277 (DKRRTFAIIS…GIVEWAPKPQ (269 aa)) is the tr-type G domain. Residues 18–25 (SHPDAGKT), 86–90 (DTPGH), and 140–143 (NKLD) contribute to the GTP site.

This sequence belongs to the TRAFAC class translation factor GTPase superfamily. Classic translation factor GTPase family. PrfC subfamily.

Its subcellular location is the cytoplasm. Functionally, increases the formation of ribosomal termination complexes and stimulates activities of RF-1 and RF-2. It binds guanine nucleotides and has strong preference for UGA stop codons. It may interact directly with the ribosome. The stimulation of RF-1 and RF-2 is significantly reduced by GTP and GDP, but not by GMP. The protein is Peptide chain release factor 3 of Shewanella woodyi (strain ATCC 51908 / MS32).